The chain runs to 602 residues: Elongation factor 4 (602 aa).

In terms of domain architecture, tr-type G spans 7–189 (RNIRNFSIIA…AIVQRIPAPQ (183 aa)). Residues 19 to 24 (DHGKST) and 136 to 139 (NKID) contribute to the GTP site.

This sequence belongs to the TRAFAC class translation factor GTPase superfamily. Classic translation factor GTPase family. LepA subfamily.

It localises to the cell inner membrane. The enzyme catalyses GTP + H2O = GDP + phosphate + H(+). Functionally, required for accurate and efficient protein synthesis under certain stress conditions. May act as a fidelity factor of the translation reaction, by catalyzing a one-codon backward translocation of tRNAs on improperly translocated ribosomes. Back-translocation proceeds from a post-translocation (POST) complex to a pre-translocation (PRE) complex, thus giving elongation factor G a second chance to translocate the tRNAs correctly. Binds to ribosomes in a GTP-dependent manner. The chain is Elongation factor 4 from Xylella fastidiosa (strain M12).